Consider the following 822-residue polypeptide: Serine/threonine-protein phosphatase 4 regulatory subunit 3 (822 aa).

Residues 1–100 (MTDTRRRVKV…DEIWEKICQV (100 aa)) enclose the WH1 domain. The disordered stretch occupies residues 744–822 (TSQLSASGHP…PLTKKARLGS (79 aa)). Positions 761–774 (SPGSPESPGSVSKS) are enriched in low complexity. Residues 793–808 (YPDDDEEDDDNDEEEK) are compositionally biased toward acidic residues.

The protein belongs to the SMEK family. As to quaternary structure, serine/threonine-protein phosphatase 4 (PP4) occurs in different assemblies of the catalytic and one or more regulatory subunits.

Its function is as follows. Regulatory subunit of serine/threonine-protein phosphatase 4. The chain is Serine/threonine-protein phosphatase 4 regulatory subunit 3 (smek1) from Xenopus laevis (African clawed frog).